A 312-amino-acid polypeptide reads, in one-letter code: Glyoxylate/hydroxypyruvate reductase A (312 aa).

R227 is a catalytic residue. H275 functions as the Proton donor in the catalytic mechanism.

It belongs to the D-isomer specific 2-hydroxyacid dehydrogenase family. GhrA subfamily.

It localises to the cytoplasm. It carries out the reaction glycolate + NADP(+) = glyoxylate + NADPH + H(+). It catalyses the reaction (R)-glycerate + NAD(+) = 3-hydroxypyruvate + NADH + H(+). The enzyme catalyses (R)-glycerate + NADP(+) = 3-hydroxypyruvate + NADPH + H(+). Catalyzes the NADPH-dependent reduction of glyoxylate and hydroxypyruvate into glycolate and glycerate, respectively. This Escherichia coli O81 (strain ED1a) protein is Glyoxylate/hydroxypyruvate reductase A.